The sequence spans 513 residues: ATP synthase subunit beta (513 aa).

Residues 1-29 (MATAPATEKKAPAKKAAAPKAAAPKKAAA) are disordered. Over residues 14–29 (KKAAAPKAAAPKKAAA) the composition is skewed to low complexity. 186-193 (GGAGVGKT) provides a ligand contact to ATP.

This sequence belongs to the ATPase alpha/beta chains family. F-type ATPases have 2 components, CF(1) - the catalytic core - and CF(0) - the membrane proton channel. CF(1) has five subunits: alpha(3), beta(3), gamma(1), delta(1), epsilon(1). CF(0) has three main subunits: a(1), b(2) and c(9-12). The alpha and beta chains form an alternating ring which encloses part of the gamma chain. CF(1) is attached to CF(0) by a central stalk formed by the gamma and epsilon chains, while a peripheral stalk is formed by the delta and b chains.

It localises to the cell inner membrane. It catalyses the reaction ATP + H2O + 4 H(+)(in) = ADP + phosphate + 5 H(+)(out). In terms of biological role, produces ATP from ADP in the presence of a proton gradient across the membrane. The catalytic sites are hosted primarily by the beta subunits. In Sphingopyxis alaskensis (strain DSM 13593 / LMG 18877 / RB2256) (Sphingomonas alaskensis), this protein is ATP synthase subunit beta.